The chain runs to 145 residues: Transcription antitermination protein NusB (145 aa).

This sequence belongs to the NusB family.

Involved in transcription antitermination. Required for transcription of ribosomal RNA (rRNA) genes. Binds specifically to the boxA antiterminator sequence of the ribosomal RNA (rrn) operons. This Burkholderia ambifaria (strain MC40-6) protein is Transcription antitermination protein NusB.